A 1023-amino-acid chain; its full sequence is GATOR2 complex protein WDR24 (1023 aa).

WD repeat units follow at residues 16–54 (NLGS…FKVT), 64–108 (SLNY…SKSV), 114–154 (DHSR…NASK), 159–199 (PKSE…IAVE), 203–243 (SHQG…SLNN), 245–287 (STIS…IPLF), and 291–329 (DHRD…KPYQ). The segment covering 563-578 (SKNIIDNSNDSNQEIN) has biased composition (low complexity). Disordered regions lie at residues 563–621 (SKNI…EPPS) and 661–824 (QKST…SIEN). Positions 584–593 (KEDEEEDDDN) are enriched in acidic residues. The span at 661–681 (QKSTDNISDNNSNVHVNIKRQ) shows a compositional bias: polar residues. The span at 682–695 (NQPTNNNNNNSNID) shows a compositional bias: low complexity. Basic and acidic residues predominate over residues 696–742 (NLEKKSNKSKSTKENKESSLTDQNKQKRNDNKEKIDNNEIDNDNKDN). The span at 743-759 (NDDDDNDVDNIGEDNDE) shows a compositional bias: acidic residues. Over residues 760 to 812 (INNNNDNNNNNNNNNNNNNNNNNNNNNNNNNNNNNNNNKNNNNDNNNNNNINN) the composition is skewed to low complexity. Residues 947–969 (ACSSCGKSIPQNSIICEKCNKAS) form a C4-type zinc finger. Positions 948, 951, 962, 965, 972, 975, 986, 989, 991, 994, 997, 1010, 1014, 1016, and 1018 each coordinate Zn(2+). An RING-type; atypical zinc finger spans residues 970–1021 (SKCSICRLPVKGMWVWCQGCGHGGHLEHMKSWFIDKNQKSCPTGCTHICTPF).

This sequence belongs to the WD repeat WDR24 family. As to quaternary structure, probably part of the GATOR complex.

It localises to the lysosome membrane. The enzyme catalyses S-ubiquitinyl-[E2 ubiquitin-conjugating enzyme]-L-cysteine + [acceptor protein]-L-lysine = [E2 ubiquitin-conjugating enzyme]-L-cysteine + N(6)-ubiquitinyl-[acceptor protein]-L-lysine.. Its pathway is protein modification; protein ubiquitination. Functionally, as a component of the GATOR complex may function in the amino acid-sensing branch of the TORC1 signaling pathway. This is GATOR2 complex protein WDR24 from Dictyostelium discoideum (Social amoeba).